A 412-amino-acid polypeptide reads, in one-letter code: FAD-dependent monooxygenase nscC (412 aa).

An N-terminal signal peptide occupies residues 1–21 (MGKQQETILIIGAGIAGLTTS). The FAD site is built by E35 and A46. An N-linked (GlcNAc...) asparagine glycan is attached at N92. FAD is bound at residue R119. Residues N170 and N231 are each glycosylated (N-linked (GlcNAc...) asparagine). Residues D326 and G339 each coordinate FAD.

It belongs to the paxM FAD-dependent monooxygenase family. It depends on FAD as a cofactor.

Its pathway is secondary metabolite biosynthesis. FAD-dependent monooxygenase; part of the gene cluster that mediates the biosynthesis of neosartoricin B, a prenylated anthracenone that probably exhibits T-cell antiproliferative activity, suggestive of a physiological role as an immunosuppressive agent. The non-reducing polyketide synthase nscA probably synthesizes and cyclizes the decaketide backbone. The hydrolase nscB then mediates the product release through hydrolysis followed by spontaneous decarboxylation. The prenyltransferase nscD catalyzes the addition of the dimethylallyl group to the aromatic C5. The FAD-dependent monooxygenase nscC is then responsible for the stereospecific hydroxylation at C2. Neosartoricin B can be converted into two additional compounds neosartoricins C and D. Neosartoricin C is a spirocyclic compound that is cyclized through the attack of C3 hydroxyl on C14, followed by dehydration. On the other hand, neosartoricin D is a further cyclized compound in which attack of C2 on C14 in neosartoricin C results in the formation of the acetal-containing dioxabicyclo-octanone ring. Both of these compounds are novel and possibly represent related metabolites of the gene cluster. This chain is FAD-dependent monooxygenase nscC, found in Trichophyton verrucosum (strain HKI 0517).